A 197-amino-acid polypeptide reads, in one-letter code: Peptide deformylase (197 aa).

Residues Cys106 and His148 each contribute to the Fe cation site. Glu149 is a catalytic residue. His152 is a Fe cation binding site.

This sequence belongs to the polypeptide deformylase family. Requires Fe(2+) as cofactor.

It carries out the reaction N-terminal N-formyl-L-methionyl-[peptide] + H2O = N-terminal L-methionyl-[peptide] + formate. Its function is as follows. Removes the formyl group from the N-terminal Met of newly synthesized proteins. Requires at least a dipeptide for an efficient rate of reaction. N-terminal L-methionine is a prerequisite for activity but the enzyme has broad specificity at other positions. The chain is Peptide deformylase from Mycobacteroides abscessus (strain ATCC 19977 / DSM 44196 / CCUG 20993 / CIP 104536 / JCM 13569 / NCTC 13031 / TMC 1543 / L948) (Mycobacterium abscessus).